A 725-amino-acid polypeptide reads, in one-letter code: Dipeptidyl-peptidase 5 (725 aa).

Positions 1–18 (MGALRWLSIAATASTALA) are cleaved as a signal peptide. Asn75, Asn96, Asn153, Asn258, Asn383, and Asn453 each carry an N-linked (GlcNAc...) asparagine glycan. Ser563 serves as the catalytic Charge relay system. N-linked (GlcNAc...) asparagine glycosylation is present at Asn610. Residues Asp646 and His678 each act as charge relay system in the active site.

This sequence belongs to the peptidase S9C family.

The protein localises to the secreted. This is Dipeptidyl-peptidase 5 from Aspergillus oryzae (strain ATCC 42149 / RIB 40) (Yellow koji mold).